A 267-amino-acid chain; its full sequence is DNA damage-regulated autophagy modulator protein 2 (267 aa).

A run of 6 helical transmembrane segments spans residues 8–28, 53–73, 87–107, 118–138, 160–180, and 203–223; these read LSFLPSALVIWTFATFIFSYI, RCLFGVMLNIAAVLGIATIYV, LIIKLNKAGLVLGILSCLGLS, FIVHVCGAVLAFSMGSFYMFV, LLLVIWCGVSALSMMTCSSIL, and VLHIVTTAAEWSMSFSFFGFF.

The protein belongs to the DRAM/TMEM150 family.

The protein localises to the lysosome membrane. It localises to the photoreceptor inner segment. It is found in the apical cell membrane. Functionally, plays a role in the initiation of autophagy. In the retina, might be involved in the process of photoreceptor cells renewal and recycling to preserve visual function. Induces apoptotic cell death when coexpressed with DRAM1. In Rattus norvegicus (Rat), this protein is DNA damage-regulated autophagy modulator protein 2 (Dram2).